A 94-amino-acid polypeptide reads, in one-letter code: Co-chaperonin GroES (94 aa).

This sequence belongs to the GroES chaperonin family. In terms of assembly, heptamer of 7 subunits arranged in a ring. Interacts with the chaperonin GroEL.

The protein localises to the cytoplasm. Together with the chaperonin GroEL, plays an essential role in assisting protein folding. The GroEL-GroES system forms a nano-cage that allows encapsulation of the non-native substrate proteins and provides a physical environment optimized to promote and accelerate protein folding. GroES binds to the apical surface of the GroEL ring, thereby capping the opening of the GroEL channel. In Lactobacillus gasseri (strain ATCC 33323 / DSM 20243 / BCRC 14619 / CIP 102991 / JCM 1131 / KCTC 3163 / NCIMB 11718 / NCTC 13722 / AM63), this protein is Co-chaperonin GroES.